The primary structure comprises 153 residues: Superoxide dismutase [Cu-Zn] (153 aa).

3 residues coordinate Cu cation: His-45, His-47, and His-62. Cys-56 and Cys-145 are oxidised to a cystine. Zn(2+)-binding residues include His-62, His-70, His-79, and Asp-82. His-119 provides a ligand contact to Cu cation.

Belongs to the Cu-Zn superoxide dismutase family. In terms of assembly, homodimer. Cu cation is required as a cofactor. Zn(2+) serves as cofactor.

The protein localises to the cytoplasm. The enzyme catalyses 2 superoxide + 2 H(+) = H2O2 + O2. Destroys radicals which are normally produced within the cells and which are toxic to biological systems. This is Superoxide dismutase [Cu-Zn] (SOD) from Schistosoma mansoni (Blood fluke).